The sequence spans 830 residues: Periplasmic nitrate reductase (830 aa).

The segment at residues 1 to 32 (MELNRRDFMKANAAVAAAAAAGITIPVKNVHA) is a signal peptide (tat-type signal). The 57-residue stretch at 39-95 (IRWDKAPCRYCGTGCSVLVGTKDGRVVATQGDPDAEVNRGLNCIKGYFLSKIMYGAD) folds into the 4Fe-4S Mo/W bis-MGD-type domain. Positions 46, 49, 53, and 81 each coordinate [4Fe-4S] cluster. Mo-bis(molybdopterin guanine dinucleotide)-binding positions include lysine 83, glutamine 151, asparagine 176, cysteine 180, 213–220 (WGSNMAEM), 244–248 (STFEH), methionine 374, glutamine 378, asparagine 484, 510–511 (SD), lysine 533, aspartate 560, and 720–729 (TGRVLEHWHT). Substrate is bound at residue phenylalanine 796. Mo-bis(molybdopterin guanine dinucleotide) contacts are provided by asparagine 804 and lysine 821.

The protein belongs to the prokaryotic molybdopterin-containing oxidoreductase family. NasA/NapA/NarB subfamily. Component of the periplasmic nitrate reductase NapAB complex composed of NapA and NapB. It depends on [4Fe-4S] cluster as a cofactor. Mo-bis(molybdopterin guanine dinucleotide) serves as cofactor. Predicted to be exported by the Tat system. The position of the signal peptide cleavage has not been experimentally proven.

The protein resides in the periplasm. The enzyme catalyses 2 Fe(II)-[cytochrome] + nitrate + 2 H(+) = 2 Fe(III)-[cytochrome] + nitrite + H2O. Its function is as follows. Catalytic subunit of the periplasmic nitrate reductase complex NapAB. Receives electrons from NapB and catalyzes the reduction of nitrate to nitrite. This is Periplasmic nitrate reductase from Mannheimia succiniciproducens (strain KCTC 0769BP / MBEL55E).